The sequence spans 394 residues: uncharacterized protein (394 aa).

Residues 7-51 form the F-box domain; sequence RKVIPNMPDLILRKIFDQYDYPVLCKMERVCRRWTNIINSKFRKE.

This is an uncharacterized protein from Caenorhabditis elegans.